We begin with the raw amino-acid sequence, 462 residues long: MNFSESFKLSGLLCRFSPDGKYLASCVQYRLVIRDVTTLQILQLYTCLDQIQHIEWSADSLFILCAMYRRGLVQVWSLEQPEWHCKIDEGSAGLVASCWSPDGRHILNTTEFHLRITVWSLCTKSVSYIKYPKACQQGLTFTRDGRYLALAERRDCRDYVSIFVCSDWQLLRHFDTDTQDLTGIEWAPNGCVLAAWDTCLEYKVLLYSLDGRLLSAYCAYEWSLGIKSVAWSPSSQFLAIGSYDGKVRLLNHVTWKMITEFGHPATINNPKTVVYKEAEKSPLLGLGHLSFPPPRAMAGALSTSESKYEIASGPVSLQTLKPVADRANPRMGVGMLAFSSDSYFLASRNDNVPNAVWIWDIQKLKLFVVLEHMSPVRSFQWDPQQPRLAICTGGSKVYLWSPAGCVSVQVPGEGDFPVLGLCWHLSGDSLALLSKDHFCLCFLETKERVGTAYEQRDGMPRT.

WD repeat units follow at residues 46–86, 89–129, 176–210, and 221–260; these read TCLD…WHCK, EGSA…VSYI, TDTQ…YSLD, and EWSL…MITE. Ser281 is modified (phosphoserine). 2 WD repeats span residues 328-369 and 371-410; these read NPRM…LFVV and EHMS…SVQV.

Interacts with SSX2IP. In terms of tissue distribution, ubiquitous.

It is found in the cytoplasm. Its subcellular location is the cytoskeleton. The protein localises to the microtubule organizing center. The protein resides in the centrosome. In terms of biological role, the SSX2IP:WRAP73 complex is proposed to act as regulator of spindle anchoring at the mitotic centrosome. Required for the centrosomal localization of SSX2IP and normal mitotic bipolar spindle morphology. Required for the targeting of centriole satellite proteins to centrosomes such as of PCM1, SSX2IP, CEP290 and PIBF1/CEP90. Required for ciliogenesis and involved in the removal of the CEP97:CCP110 complex from the mother centriole. Involved in ciliary vesicle formation at the mother centriole and required for the docking of vesicles to the basal body during ciliogenesis; may promote docking of RAB8A- and ARL13B-containing vesicles. This chain is WD repeat-containing protein WRAP73 (Wrap73), found in Mus musculus (Mouse).